A 208-amino-acid chain; its full sequence is dTTP/UTP pyrophosphatase (208 aa).

The active-site Proton acceptor is the D79.

It belongs to the Maf family. YhdE subfamily. It depends on a divalent metal cation as a cofactor.

The protein resides in the cytoplasm. The enzyme catalyses dTTP + H2O = dTMP + diphosphate + H(+). It catalyses the reaction UTP + H2O = UMP + diphosphate + H(+). Its function is as follows. Nucleoside triphosphate pyrophosphatase that hydrolyzes dTTP and UTP. May have a dual role in cell division arrest and in preventing the incorporation of modified nucleotides into cellular nucleic acids. The chain is dTTP/UTP pyrophosphatase from Mesorhizobium japonicum (strain LMG 29417 / CECT 9101 / MAFF 303099) (Mesorhizobium loti (strain MAFF 303099)).